The primary structure comprises 49 residues: Peridinin-chlorophyll a-binding protein (49 aa).

Monomer. In terms of processing, binds 12 peridinin and 2 chlorophyll a molecules per monomer.

Its subcellular location is the plastid. It is found in the chloroplast. In terms of biological role, water-soluble antenna for capture of solar energy in the blue-green range. Peridinin is an asymmetric carotenoid. The protein is Peridinin-chlorophyll a-binding protein of Alexandrium cohorticula (Dinoflagellate).